A 164-amino-acid chain; its full sequence is FMN reductase (NADH) RutF (164 aa).

The protein belongs to the non-flavoprotein flavin reductase family. RutF subfamily.

The catalysed reaction is FMNH2 + NAD(+) = FMN + NADH + 2 H(+). Functionally, catalyzes the reduction of FMN to FMNH2 which is used to reduce pyrimidine by RutA via the Rut pathway. The polypeptide is FMN reductase (NADH) RutF (Klebsiella pneumoniae (strain 342)).